Reading from the N-terminus, the 244-residue chain is MSNLLLGVNIDHIATLRNARNTTYPDPIYAAFIAEQSGADSITIHLREDRRHITDRDVEMLCKTIQTSMNLEIAATDEMINIACTLKPHCCCLVPERRQELTTEGGLDIINKANKLQDIIFKLTEAGIRVSLFIDPNEQQISVAYNIGAPYIELHTGMYSHATDATTQNLEYKRIKKSVQYAVNKGLKVNAGHGLNYYNVRPIAMLPGIQELNIGHAIISRSIFCGLPKAIQDMKKLIQDSRRG.

Asn9 provides a ligand contact to 3-amino-2-oxopropyl phosphate. 11–12 (DH) serves as a coordination point for 1-deoxy-D-xylulose 5-phosphate. Arg20 provides a ligand contact to 3-amino-2-oxopropyl phosphate. His45 (proton acceptor) is an active-site residue. 1-deoxy-D-xylulose 5-phosphate is bound by residues Arg47 and His52. The active-site Proton acceptor is the Glu72. Thr102 contributes to the 1-deoxy-D-xylulose 5-phosphate binding site. Residue His193 is the Proton donor of the active site. Residues Gly194 and 215–216 (GH) contribute to the 3-amino-2-oxopropyl phosphate site.

The protein belongs to the PNP synthase family. In terms of assembly, homooctamer; tetramer of dimers.

It is found in the cytoplasm. It carries out the reaction 3-amino-2-oxopropyl phosphate + 1-deoxy-D-xylulose 5-phosphate = pyridoxine 5'-phosphate + phosphate + 2 H2O + H(+). The protein operates within cofactor biosynthesis; pyridoxine 5'-phosphate biosynthesis; pyridoxine 5'-phosphate from D-erythrose 4-phosphate: step 5/5. Catalyzes the complicated ring closure reaction between the two acyclic compounds 1-deoxy-D-xylulose-5-phosphate (DXP) and 3-amino-2-oxopropyl phosphate (1-amino-acetone-3-phosphate or AAP) to form pyridoxine 5'-phosphate (PNP) and inorganic phosphate. In Blochmanniella pennsylvanica (strain BPEN), this protein is Pyridoxine 5'-phosphate synthase.